We begin with the raw amino-acid sequence, 196 residues long: Protein LURP-one-related 8 (196 aa).

It belongs to the LOR family.

Might be related to the phospholipid scramblase and tubby-like superfamily of membrane tethered transcription factors. The protein is Protein LURP-one-related 8 of Arabidopsis thaliana (Mouse-ear cress).